Consider the following 675-residue polypeptide: Potassium-transporting ATPase ATP-binding subunit (675 aa).

The next 4 helical transmembrane spans lie at 38 to 58 (VMFV…ANLV), 67 to 87 (LAIT…EGMA), 216 to 236 (IALS…VVTL), and 253 to 273 (IALL…AIGI). The active-site 4-aspartylphosphate intermediate is the aspartate 304. Residues aspartate 341, glutamate 345, 371–378 (FTAQTRMS), and lysine 389 contribute to the ATP site. Mg(2+) is bound by residues aspartate 512 and aspartate 516. 3 helical membrane passes run 582–602 (FAIL…LNVM), 610–630 (AVLS…PLAL), and 654–674 (GGIL…GGLM).

Belongs to the cation transport ATPase (P-type) (TC 3.A.3) family. Type IA subfamily. The system is composed of three essential subunits: KdpA, KdpB and KdpC.

It is found in the cell membrane. The enzyme catalyses K(+)(out) + ATP + H2O = K(+)(in) + ADP + phosphate + H(+). Its function is as follows. Part of the high-affinity ATP-driven potassium transport (or Kdp) system, which catalyzes the hydrolysis of ATP coupled with the electrogenic transport of potassium into the cytoplasm. This subunit is responsible for energy coupling to the transport system and for the release of the potassium ions to the cytoplasm. The sequence is that of Potassium-transporting ATPase ATP-binding subunit from Deinococcus radiodurans (strain ATCC 13939 / DSM 20539 / JCM 16871 / CCUG 27074 / LMG 4051 / NBRC 15346 / NCIMB 9279 / VKM B-1422 / R1).